The sequence spans 283 residues: Non-selective voltage-gated ion channel VDAC3 (283 aa).

An N-acetylcysteine modification is found at cysteine 2. Position 4 is a phosphothreonine (threonine 4). 3 positions are modified to N6-acetyllysine: lysine 12, lysine 15, and lysine 20. A run of 2 beta stranded transmembrane segments spans residues methionine 26–serine 35 and valine 39–alanine 47. Threonine 33 carries the post-translational modification Phosphothreonine. A Glycyl lysine isopeptide (Lys-Gly) (interchain with G-Cter in ubiquitin) cross-link involves residue lysine 53. 3 beta stranded membrane passes run alanine 54–valine 64, leucine 69–asparagine 76, and threonine 80–asparagine 89. Lysine 90 is subject to N6-acetyllysine. A beta stranded transmembrane segment spans residues leucine 95–valine 104. Glycyl lysine isopeptide (Lys-Gly) (interchain with G-Cter in ubiquitin) cross-links involve residues lysine 109 and lysine 110. The next 10 membrane-spanning stretches (beta stranded) occupy residues serine 111–arginine 120, phenylalanine 123–aspartate 130, threonine 137–alanine 145, leucine 150–aspartate 158, lysine 163–alanine 175, phenylalanine 178–asparagine 185, glutamate 189–valine 198, isoleucine 202–threonine 211, arginine 218–leucine 227, and threonine 231–asparagine 238. Serine 241 carries the phosphoserine modification. NAD(+) is bound by residues leucine 242 to glycine 244 and serine 260 to aspartate 264. 2 beta stranded membrane passes run leucine 242 to leucine 251 and glycine 254 to valine 263. Lysine 266 is modified (N6-acetyllysine; alternate). Residue lysine 266 forms a Glycyl lysine isopeptide (Lys-Gly) (interchain with G-Cter in ubiquitin); alternate linkage. Residues histidine 273–glutamate 282 form a beta stranded membrane-spanning segment.

This sequence belongs to the eukaryotic mitochondrial porin family. Interacts with ARMC12 in a TBC1D21-dependent manner. Interacts with MISFA. In terms of processing, ubiquitinated by PRKN during mitophagy, leading to its degradation and enhancement of mitophagy. Deubiquitinated by USP30. In terms of tissue distribution, isoform 1 is widely expressed with strong expression in atrium and ascitic tumor, lower levels in brain and very low levels in liver and kidney. Isoform 2 is also widely expressed with highest levels in brain but no expression in kidney. Also expressed in flagella of epididymal sperm.

It is found in the mitochondrion outer membrane. Its subcellular location is the membrane. The enzyme catalyses chloride(in) = chloride(out). It carries out the reaction K(+)(in) = K(+)(out). Its function is as follows. Non-selective voltage-gated ion channel that mediates the transport of anions and cations through the mitochondrion outer membrane and plasma membrane. Forms a high-conducting channel with a stable open state and a voltage-induced closure with a mild preference for anions over cations. Involved in male fertility and sperm mitochondrial sheath formation. The sequence is that of Non-selective voltage-gated ion channel VDAC3 from Rattus norvegicus (Rat).